We begin with the raw amino-acid sequence, 361 residues long: Trans-enoyl reductase gkaC (361 aa).

Residues 15–357 (EDVGSFEISR…RREISGKKMV (343 aa)) enclose the Enoyl reductase (ER) domain. Residues 48–51 (CDWK), 172–175 (SSAS), 195–198 (SPKN), Y213, 260–261 (FE), and 351–352 (IS) each bind NADP(+).

The protein belongs to the zinc-containing alcohol dehydrogenase family. Monomer.

It functions in the pathway mycotoxin biosynthesis. Its function is as follows. Trans-enoyl reductasee; part of the gene cluster that mediates the biosynthesis of GKK1032, fungal natural products containing a macrocyclic para-cyclophane connected to a decahydrofluorene ring system that show potent antitumor activities. Within the pathway, the PKS-NRPS gkaA, with the help of the trans-enoyl reductase gkaC, synthesize the polyketide-tyrosyl acyl thioester product which can be reductively off-loaded by the terminal reductase (R) domain in gkaA. The PKS module of gkaA acts in combination with the trans-acting enoyl reductase gkaC to produce a methylated polyketide attached to the ACP domain. In parallel, the adenylation (A) domain of the NRPS module activated L-tyrosine, which is then transferred to the ACP domain. The condensation (C) domain subsequently links this group to the polyketide chain, forming an enzyme-bound amide. The alpha/beta hydrolase gkaG is then required to catalyze the subsequent Knoevenagel condensation that affords the 3-pyrrolin-2-one ring, whereas the three proteins gkaB, gkadX and gkaZ then function synergistically to form the cyclophane. The polypeptide is Trans-enoyl reductase gkaC (Penicillium citrinum).